The following is a 154-amino-acid chain: MNQKYEVEEIKNKELVKLARMLIDYYHIQGMVKGGGAGRNSRYFMYLEKEDDKKYIVAVAWLHDNTPFRFIAQQYNIPNDRSYFIRRVTKTAPGDHLVNFLNDLAEKLKKDGFEVLWTLGFPDHSNALYKKAGFKLVGQTSRTKHEVYVKYLNK.

This is an uncharacterized protein from Sulfolobus islandicus rod-shaped virus 1 (SIRV-1).